The chain runs to 202 residues: Outer-membrane lipoprotein LolB (202 aa).

Residues 1 to 24 (MESKEQHLIRQYFILAMFFLFLAG) form the signal peptide. C25 carries N-palmitoyl cysteine lipidation. C25 carries the S-diacylglycerol cysteine lipid modification.

It belongs to the LolB family. As to quaternary structure, monomer.

The protein resides in the cell outer membrane. Plays a critical role in the incorporation of lipoproteins in the outer membrane after they are released by the LolA protein. In Pseudoalteromonas translucida (strain TAC 125), this protein is Outer-membrane lipoprotein LolB.